The primary structure comprises 66 residues: Large ribosomal subunit protein bL35 (66 aa).

It belongs to the bacterial ribosomal protein bL35 family.

In Deinococcus deserti (strain DSM 17065 / CIP 109153 / LMG 22923 / VCD115), this protein is Large ribosomal subunit protein bL35.